The primary structure comprises 87 residues: Small ribosomal subunit protein uS17 (87 aa).

The protein belongs to the universal ribosomal protein uS17 family. As to quaternary structure, part of the 30S ribosomal subunit.

One of the primary rRNA binding proteins, it binds specifically to the 5'-end of 16S ribosomal RNA. This is Small ribosomal subunit protein uS17 from Lacticaseibacillus casei (strain BL23) (Lactobacillus casei).